Here is a 935-residue protein sequence, read N- to C-terminus: MTELKAKGPRAPHVAGGPPSPEVGSPLLCRPAVGPFPGSQTSDTLPEVSAIPISLDGLLFPRPCQGQDPSDEKTQDQQSLSDVEGAYSRAEAKRGAGGSSSSPPEKDSGLLDSVLDTLLAPSGPGQSQPSPPACEVTSSWCLFGPELPEDPPAAPATQGVLSPLMSRSGGKAGDSSGTAAAHKVLPRGLSPSRQLLLPASGSPHWSGAPVKPSPQPAAVEVEEEDGSESEDSAGPLLKGKPRALGGAAAGGGAAAVPPGVAAGGVALVPKEDSRFSAPRVALVEQDAPMAPGRSPLATTVMDFIHVPILPLNHALLAARTRQLLEDESYDGGAGAASAFAPPRSSPSASSTPVAVGDFPDCAYPPDAEPKDDAYPLYSDFQPPALKIKEEEEGAEASTRSPRSYLVAGANPAAFPDFPLGPPPPLPPRAPPTRAGEAAVTAAPASASVSSASSSGSTLECILYKAQGAPPQQGPFAPPPXKAPGVSGCLLPRDGLPSTSASAAAAAAGAAPALYPALGLNGLPQLGYQAAVLKEGLPQVYPPYLNYLRPDSEASQSPQYSFESLPQKICLICGDEASGCHYGVLTCGSCKVFFKRAMEGQHNYLCAGRNDCIVDKIRRKNCPACRLRKCCQAGMVLGGRKFKKFNKVRVVRALDAVALPQPVGIPNESQALSQRFTFSPGQDIQLIPPLINLLMSIEPDVIYAGHDNTKPDTSSSLLTSLNQLGERQLLSVVKWSKSLPGFRNLHIDDQITLIQYSWMSLMVFGLGWRSYKHVSGQMLYFAPDLILNEQRMKESSFYSLCLTMWQIPQEFVKLQVSQEEFLCMKVLLLLNTIPLEGLRSQTQFEEMRSSYIRELIKAIGLRQKGVVSSSQRFYQLTKLLDNLHDLVKQLHLYCLNTFIQSRALSVEFPEMMSEVIAAQLPKILAGMVKPLLFHKK.

An AF3; mediates transcriptional activation region spans residues 1-164 (MTELKAKGPR…PATQGVLSPL (164 aa)). Residues 1–254 (MTELKAKGPR…GGAAAGGGAA (254 aa)) are disordered. The modulating, Pro-Rich stretch occupies residues 1-568 (MTELKAKGPR…YSFESLPQKI (568 aa)). A Phosphoserine modification is found at serine 20. The short motif at 55 to 59 (LDGLL) is the LXXL motif 1 element. Serine 81 carries the phosphoserine modification. Positions 115–119 (LDTLL) match the LXXL motif 2 motif. Phosphoserine occurs at positions 130 and 162. The interval 165–305 (MSRSGGKAGD…LATTVMDFIH (141 aa)) is mediates transcriptional transrepression. Residues 183–187 (KVLPR) carry the Nuclear localization signal motif. A phosphoserine mark is found at serine 190 and serine 213. The segment covering 220-231 (EVEEEDGSESED) has biased composition (acidic residues). Residues 232 to 246 (SAGPLLKGKPRALGG) show a composition bias toward low complexity. Serine 294 bears the Phosphoserine; by MAPK1 mark. Positions 331 to 378 (GGAGAASAFAPPRSSPSASSTPVAVGDFPDCAYPPDAEPKDDAYPLYS) are disordered. Residues 335–350 (AASAFAPPRSSPSASS) are compositionally biased toward low complexity. At serine 345 the chain carries Phosphoserine; by MAPK. Lysine 388 is covalently cross-linked (Glycyl lysine isopeptide (Lys-Gly) (interchain with G-Cter in SUMO); alternate). A Glycyl lysine isopeptide (Lys-Gly) (interchain with G-Cter in ubiquitin); alternate cross-link involves residue lysine 388. Serine 400 carries the phosphoserine; by CDK2 modification. A compositionally biased stretch (pro residues) spans 418 to 430 (PLGPPPPLPPRAP). The segment at 418–438 (PLGPPPPLPPRAPPTRAGEAA) is disordered. An AF1; mediates transcriptional activation region spans residues 456 to 548 (STLECILYKA…VYPPYLNYLR (93 aa)). Lysine 533 participates in a covalent cross-link: Glycyl lysine isopeptide (Lys-Gly) (interchain with G-Cter in SUMO). 2 NR C4-type zinc fingers span residues 569–589 (CLIC…CGSC) and 605–629 (CAGR…LRKC). The nuclear receptor DNA-binding region spans 569–641 (CLICGDEASG…AGMVLGGRKF (73 aa)). Residue serine 678 is modified to Phosphoserine. The NR LBD domain maps to 681–915 (QDIQLIPPLI…EFPEMMSEVI (235 aa)). The AF2; mediates transcriptional activation stretch occupies residues 689–935 (LINLLMSIEP…MVKPLLFHKK (247 aa)).

It belongs to the nuclear hormone receptor family. In terms of assembly, interacts with SMARD1 and UNC45A. Interacts with CUEDC2; the interaction promotes ubiquitination, decreases sumoylation, and represses transcriptional activity. Interacts with PIAS3; the interaction promotes sumoylation of PR in a hormone-dependent manner, inhibits DNA-binding, and alters nuclear export. Interacts with SP1; the interaction requires ligand-induced phosphorylation on Ser-345 by ERK1/2-MAPK. Interacts with PRMT2. Interacts with NCOA2 and NCOA1. Interacts with KLF9. Interacts with GTF2B. In terms of processing, phosphorylated on multiple serine sites. Several of these sites are hormone-dependent. Phosphorylation on Ser-294 is highly hormone-dependent and modulates ubiquitination and sumoylation on Lys-388. Phosphorylation on Ser-102 and Ser-345 also requires induction by hormone. Basal phosphorylation on Ser-81, Ser-162, Ser-190 and Ser-400 is increased in response to progesterone and can be phosphorylated in vitro by the CDK2-A1 complex. Increased levels of phosphorylation on Ser-400 also in the presence of EGF, heregulin, IGF, PMA and FBS. Phosphorylation at this site by CDK2 is ligand-independent, and increases nuclear translocation and transcriptional activity. Phosphorylation at Ser-162 and Ser-294, but not at Ser-190, is impaired during the G(2)/M phase of the cell cycle. Phosphorylation on Ser-345 by ERK1/2 MAPK is required for interaction with SP1. Sumoylation is hormone-dependent and represses transcriptional activity. Sumoylation on all three sites is enhanced by PIAS3. Desumoylated by SENP1. Sumoylation on Lys-388, the main site of sumoylation, is repressed by ubiquitination on the same site, and modulated by phosphorylation at Ser-294. Post-translationally, ubiquitination is hormone-dependent and represses sumoylation on the same site. Promoted by MAPK-mediated phosphorylation on Ser-294. In terms of processing, palmitoylated by ZDHHC7 and ZDHHC21. Palmitoylation is required for plasma membrane targeting and for rapid intracellular signaling via ERK and AKT kinases and cAMP generation.

It is found in the nucleus. It localises to the cytoplasm. Its function is as follows. The steroid hormones and their receptors are involved in the regulation of eukaryotic gene expression and affect cellular proliferation and differentiation in target tissues. Transcriptional activator of several progesteron-dependent promoters in a variety of cell types. Involved in activation of SRC-dependent MAPK signaling on hormone stimulation. In Pongo pygmaeus (Bornean orangutan), this protein is Progesterone receptor (PGR).